The primary structure comprises 198 residues: MKIVGITGGIGSGKTTVCRYLKELGVNIIDADEIGHRVLQNKGIRTRITDVFGNEVMNPDGSINRKILGELVFGYPERLEHLNKITHPLIEQAIASLLEEYRQKGIKAVAIEAPLLVEAGWLKLVNEVWLITAPKESIFKRLRNRMGLSREQVMARIQSQATDNERLKYASIVINNNCRFEDLKSCVQLLAKERLELA.

The 196-residue stretch at 3 to 198 folds into the DPCK domain; that stretch reads IVGITGGIGS…LLAKERLELA (196 aa). 11–16 is an ATP binding site; it reads GSGKTT.

The protein belongs to the CoaE family.

Its subcellular location is the cytoplasm. The catalysed reaction is 3'-dephospho-CoA + ATP = ADP + CoA + H(+). It functions in the pathway cofactor biosynthesis; coenzyme A biosynthesis; CoA from (R)-pantothenate: step 5/5. Its function is as follows. Catalyzes the phosphorylation of the 3'-hydroxyl group of dephosphocoenzyme A to form coenzyme A. The sequence is that of Dephospho-CoA kinase from Dehalococcoides mccartyi (strain ATCC BAA-2266 / KCTC 15142 / 195) (Dehalococcoides ethenogenes (strain 195)).